We begin with the raw amino-acid sequence, 412 residues long: UDP-galactose transporter homolog 1 (412 aa).

Residues 3 to 23 (VLRLAVCISGVYAAFLLWAIA) traverse the membrane as a helical segment. Residues 31–51 (FPSVHPHPHQQPHSPSDPPPG) are disordered. 4 consecutive transmembrane segments (helical) span residues 58–78 (LFLN…YLSF), 139–159 (LLAL…IGFL), 197–217 (YIVV…AETS), and 222–242 (GGSD…IDGL). N-linked (GlcNAc...) asparagine glycosylation is present at N244. Helical transmembrane passes span 262 to 282 (MMFT…VLPL), 325 to 345 (SALA…LFIF), 355 to 375 (TLVM…VVVF), and 379 to 399 (LTKG…VEAG).

This sequence belongs to the nucleotide-sugar transporter family. SLC35B subfamily.

The protein localises to the endoplasmic reticulum membrane. In terms of biological role, may be involved in specific transport of UDP-Gal from the cytosol to the Golgi lumen. Involved in the maintenance of optimal conditions for the folding of secretory pathway proteins in the endoplasmic reticulum. The protein is UDP-galactose transporter homolog 1 (HUT1-A) of Cryptococcus neoformans var. neoformans serotype D (strain JEC21 / ATCC MYA-565) (Filobasidiella neoformans).